Reading from the N-terminus, the 148-residue chain is Phosphoribosyl-AMP cyclohydrolase (148 aa).

Aspartate 91 provides a ligand contact to Mg(2+). Zn(2+) is bound at residue cysteine 92. Mg(2+) contacts are provided by aspartate 93 and aspartate 95. The Zn(2+) site is built by cysteine 109 and cysteine 116.

It belongs to the PRA-CH family. In terms of assembly, homodimer. It depends on Mg(2+) as a cofactor. Zn(2+) serves as cofactor.

The protein resides in the cytoplasm. The catalysed reaction is 1-(5-phospho-beta-D-ribosyl)-5'-AMP + H2O = 1-(5-phospho-beta-D-ribosyl)-5-[(5-phospho-beta-D-ribosylamino)methylideneamino]imidazole-4-carboxamide. Its pathway is amino-acid biosynthesis; L-histidine biosynthesis; L-histidine from 5-phospho-alpha-D-ribose 1-diphosphate: step 3/9. In terms of biological role, catalyzes the hydrolysis of the adenine ring of phosphoribosyl-AMP. The sequence is that of Phosphoribosyl-AMP cyclohydrolase from Rhodopseudomonas palustris (strain HaA2).